The following is a 377-amino-acid chain: 4-hydroxy-3-methylbut-2-en-1-yl diphosphate synthase (flavodoxin) (377 aa).

[4Fe-4S] cluster is bound by residues Cys275, Cys278, Cys310, and Glu317.

This sequence belongs to the IspG family. [4Fe-4S] cluster is required as a cofactor.

It catalyses the reaction (2E)-4-hydroxy-3-methylbut-2-enyl diphosphate + oxidized [flavodoxin] + H2O + 2 H(+) = 2-C-methyl-D-erythritol 2,4-cyclic diphosphate + reduced [flavodoxin]. The protein operates within isoprenoid biosynthesis; isopentenyl diphosphate biosynthesis via DXP pathway; isopentenyl diphosphate from 1-deoxy-D-xylulose 5-phosphate: step 5/6. Its function is as follows. Converts 2C-methyl-D-erythritol 2,4-cyclodiphosphate (ME-2,4cPP) into 1-hydroxy-2-methyl-2-(E)-butenyl 4-diphosphate. This is 4-hydroxy-3-methylbut-2-en-1-yl diphosphate synthase (flavodoxin) from Ruegeria sp. (strain TM1040) (Silicibacter sp.).